The sequence spans 131 residues: Lymphocyte antigen 6C1 (131 aa).

Residues 1 to 26 (MDTSHTTKSCVLILLVALLCAERAQG) form the signal peptide. Positions 27–115 (LQCYECYGVP…PTAGSTWTMA (89 aa)) constitute a UPAR/Ly6 domain. 5 disulfide bridges follow: C29/C53, C32/C41, C46/C74, C78/C95, and C96/C101. Residue G109 is the site of GPI-anchor amidated glycine attachment. Residues 110 to 131 (STWTMAGVLLFSLSSVVLQTLL) constitute a propeptide, removed in mature form.

It localises to the cell membrane. The polypeptide is Lymphocyte antigen 6C1 (Ly6c1) (Mus musculus (Mouse)).